The primary structure comprises 594 residues: (-)-endo-fenchol synthase, chloroplastic (594 aa).

The transit peptide at 1–50 (MSSLVMHVGIVNKPAITYLPTLSRRASNLHNVSSTRLQTSCSLQLDYKPV) directs the protein to the chloroplast. Mg(2+) contacts are provided by Asp-348, Asp-352, Asp-492, and Glu-500. The DDXXD motif motif lies at 348 to 352 (DDIYD).

The protein belongs to the terpene synthase family. Tpsa subfamily. Mg(2+) serves as cofactor. Requires Mn(2+) as cofactor. In terms of tissue distribution, expressed at low levels in leaves.

Its subcellular location is the plastid. The protein resides in the chloroplast. The enzyme catalyses (2E)-geranyl diphosphate = alpha-pinene + diphosphate. The catalysed reaction is (2E)-geranyl diphosphate + H2O = (1S,2S,4R)-endo-fenchol + diphosphate. It catalyses the reaction (2E)-geranyl diphosphate = limonene + diphosphate. Its pathway is secondary metabolite biosynthesis; terpenoid biosynthesis. In terms of biological role, monoterpene synthase involved in the biosynthesis of volatile compounds widely used in aromatherapy and folk medicine, and present in culinary herbs. Mediates the conversion of (2E)-geranyl diphosphate (GPP) into alpha fenchol, limonene and alpha-pinene and, as minor compounds, into beta-myrcene, alpha-terpinolene and alpha-phellandrene. This chain is (-)-endo-fenchol synthase, chloroplastic, found in Lavandula stoechas (Butterfly lavender).